The chain runs to 213 residues: MAKNYYDITLALAGVCQAARLVQQLAHQGHCDSDALHVSLNSIIDLDPESTLAVFGGSEANLRLGLETLLGVLNTSSRQGLNAELTRYTLSLMVLERKLAASKGAMDTLGNRIAGLHRQLEHFDLQSETLLSAMAGIYVDVISPLGPRIQVTGSPAVLQSPQVQAKVRSALLAGIRAAVLWHQVGGGRLQLMFSRNRLVNQAKQILAHLTPEL.

Belongs to the HflD family.

The protein localises to the cytoplasm. It is found in the cell inner membrane. The protein is High frequency lysogenization protein HflD homolog of Klebsiella pneumoniae (strain 342).